A 209-amino-acid chain; its full sequence is Kynurenine formamidase (209 aa).

Tryptophan 20 serves as a coordination point for substrate. Residues histidine 50, histidine 54, and aspartate 56 each contribute to the Zn(2+) site. The active-site Proton donor/acceptor is histidine 60. Zn(2+)-binding residues include histidine 161 and glutamate 173.

This sequence belongs to the Cyclase 1 superfamily. KynB family. In terms of assembly, homodimer. Zn(2+) is required as a cofactor.

The catalysed reaction is N-formyl-L-kynurenine + H2O = L-kynurenine + formate + H(+). Its pathway is amino-acid degradation; L-tryptophan degradation via kynurenine pathway; L-kynurenine from L-tryptophan: step 2/2. In terms of biological role, catalyzes the hydrolysis of N-formyl-L-kynurenine to L-kynurenine, the second step in the kynurenine pathway of tryptophan degradation. This Bacillus cereus (strain ATCC 10987 / NRS 248) protein is Kynurenine formamidase.